Here is a 78-residue protein sequence, read N- to C-terminus: Consomatin Te1 (78 aa).

Positions methionine 1 to glycine 22 are cleaved as a signal peptide. Positions glycine 23–arginine 56 are excised as a propeptide. A disulfide bridge connects residues cysteine 63 and cysteine 68. Tryptophan 65 bears the D-tryptophan mark. Residues proline 69, proline 70, and proline 72 each carry the 4-hydroxyproline modification. Positions arginine 74 to serine 78 are excised as a propeptide.

The protein belongs to the conotoxin C superfamily. Consomatin family. As to expression, expressed by the venom duct.

It localises to the secreted. Functionally, moderately activates human somatostatin receptors (SSTR) with a preferential activation of SSTR1 and SSTR4. In vivo, does not cause behavioral changes in mice within a few minutes of intracranial injection, but causes a progressive loss of movement thereafter. Four to five hours after injection, mice recover, even with the highest dose tested. Shows antinociception and antihyperalgesia activities in two mouse models of acute pain, most probably by acting outside the central nervous system. The polypeptide is Consomatin Te1 (Conus terebra (Sea snail)).